Consider the following 373-residue polypeptide: MSTLTLSNITKSYPNGYQAVHKLSLNIEDGEMVVLVGPSGCGKSTLLRMIAGLEEITSGKLKIDDCLVNNLEPSERDIAMVFQNYALYPHMSVYDNMAYGLRNRKTPKADIQRIVNDTAEMLEIDHLLERKPKELSGGQRQRVAMGRAIVRKPKIFLFDEPLSNLDAKLRVQMRLQIKKLQRRLATTSVYVTHDQVEAMTLADKLVVLNQGTVEQVGTPLEIYDNPASVFVATFIGSPAMNILDAKVTNKGLTLGSSLSPIDTQSLKPGDIKLGLRPEHINIVEKSPWFEVEVELIESLGADLLLYCKTLDCKEMDETDQNLVVRAEGHSKIEIGDILGLDIDQKHLHLFDADTSKHIEIDLKMNDQKELLYA.

The region spanning 4-235 (LTLSNITKSY…PASVFVATFI (232 aa)) is the ABC transporter domain. Position 37–44 (37–44 (GPSGCGKS)) interacts with ATP.

Belongs to the ABC transporter superfamily. sn-glycerol-3-phosphate importer (TC 3.A.1.1.3) family. As to quaternary structure, the complex is composed of two ATP-binding proteins (UgpC), two transmembrane proteins (UgpA and UgpE) and a solute-binding protein (UgpB).

Its subcellular location is the cell inner membrane. It carries out the reaction sn-glycerol 3-phosphate(out) + ATP + H2O = sn-glycerol 3-phosphate(in) + ADP + phosphate + H(+). Part of the ABC transporter complex UgpBAEC involved in sn-glycerol-3-phosphate (G3P) import. Responsible for energy coupling to the transport system. This Psychromonas ingrahamii (strain DSM 17664 / CCUG 51855 / 37) protein is sn-glycerol-3-phosphate import ATP-binding protein UgpC.